The sequence spans 1626 residues: MAKSGGCGAGAGVGGGNGALTWVTLFDQNNAAKKEESETANKNDSSKKLSVERVYQKKTQLEHILLRPDTYIGSVEPLTQFMWVYDEDVGMNCREVTFVPGLYKIFDEILVNAADNKQRDKNMTCIKVSIDPESNIISIWNNGKGIPVVEHKVEKVYVPALIFGQLLTSSNYDDDEKKVTGGRNGYGAKLCNIFSTKFTVETACKEYKHSFKQTWMNNMMKTSEAKIKHFDGEDYTCITFQPDLSKFKMEKLDKDIVALMTRRAYDLAGSCRGVKVMFNGKKLPVNGFRSYVDLYVKDKLDETGVALKVIHELANERWDVCLTLSEKGFQQISFVNSIATTKGGRHVDYVVDQVVGKLIEVVKKKNKAGVSVKPFQVKNHIWVFINCLIENPTFDSQTKENMTLQPKSFGSKCQLSEKFFKAASNCGIVESILNWVKFKAQTQLNKKCSSVKYSKIKGIPKLDDANDAGGKHSLECTLILTEGDSAKSLAVSGLGVIGRDRYGVFPLRGKILNVREASHKQIMENAEINNIIKIVGLQYKKSYDDAESLKTLRYGKIMIMTDQDQDGSHIKGLLINFIHHNWPSLLKHGFLEEFITPIVKASKNKQELSFYSIPEFDEWKKHIENQKAWKIKYYKGLGTSTAKEAKEYFADMERHRILFRYAGPEDDAAITLAFSKKKIDDRKEWLTNFMEDRRQRRLHGLPEQFLYGTATKHLTYNDFINKELILFSNSDNERSIPSLVDGFKPGQRKVLFTCFKRNDKREVKVAQLAGSVAEMSAYHHGEQALMMTIVNLAQNFVGSNNINLLQPIGQFGTRLHGGKDAASPRYIFTMLSTLARLLFPAVDDNLLKFLYDDNQRVEPEWYIPIIPMVLINGAEGIGTGWACKLPNYDAREIVNNVRRMLDGLDPHPMLPNYKNFKGTIQELGQNQYAVSGEIFVVDRNTVEITELPVRTWTQVYKEQVLEPMLNGTDKTPALISDYKEYHTDTTVKFVVKMTEEKLAQAEAAGLHKVFKLQTTLTCNSMVLFDHMGCLKKYETVQDILKEFFDLRLSYYGLRKEWLVGMLGAESTKLNNQARFILEKIQGKITIENRSKKDLIQMLVQRGYESDPVKAWKEAQEKAAEEDETQNQHDDSSSDSGTPSGPDFNYILNMSLWSLTKEKVEELIKQRDAKGREVNDLKRKSPSDLWKEDLAAFVEELDKVESQEREDVLAGMSGKAIKGKVGKPKVKKLQLEETMPSPYGRRIIPEITAMKADASKKLLKKKKGDLDTAAVKVEFDEEFSGAPVEGAGEEALTPSVPINKGPKPKREKKEPGTRVRKTPTSSGKPSAKKVKKRNPWSDDESKSESDLEETEPVVIPRDSLLRRAAAERPKYTFDFSEEEDDDADDDDDDNNDLEELKVKASPITNDGEDEFVPSDGLDKDEYTFSPGKSKATPEKSLHDKKSQDFGNLFSFPSYSQKSEDDSAKFDSNEEDSASVFSPSFGLKQTDKVPSKTVAAKKGKPSSDTVPKPKRAPKQKKVVEAVNSDSDSEFGIPKKTTTPKGKGRGAKKRKASGSENEGDYNPGRKTSKTTSKKPKKTSFDQDSDVDIFPSDFPTEPPSLPRTGRARKEVKYFAESDEEEDDVDFAMFN.

An N-acetylalanine modification is found at A2. Position 3 is an N6-acetyllysine (K3). Residues Q28, N29, K33, and K34 each participate in a glycyl lysine isopeptide (Lys-Gly) (interchain with G-Cter in SUMO2) cross-link. Residues N112, N141, and 169-171 each bind ATP; that span reads SSN. Glycyl lysine isopeptide (Lys-Gly) (interchain with G-Cter in SUMO2) cross-links involve residues K177 and K178. 182–189 lines the ATP pocket; it reads GRNGYGAK. Glycyl lysine isopeptide (Lys-Gly) (interchain with G-Cter in SUMO2) cross-links involve residues K228 and K299. The interaction with DNA stretch occupies residues 363 to 365; the sequence is KKK. Glycyl lysine isopeptide (Lys-Gly) (interchain with G-Cter in SUMO2) cross-links involve residues K367 and K373. 397 to 399 contacts ATP; it reads QTK. Glycyl lysine isopeptide (Lys-Gly) (interchain with G-Cter in SUMO2) cross-links involve residues K437, K439, and K446. Positions 476 to 593 constitute a Toprim domain; sequence CTLILTEGDS…SLLKHGFLEE (118 aa). Positions 482, 562, and 564 each coordinate Mg(2+). Glycyl lysine isopeptide (Lys-Gly) (interchain with G-Cter in SUMO2) cross-links involve residues K600, K605, K635, K643, K646, K676, and K712. One can recognise a Topo IIA-type catalytic domain in the interval 736-1189; sequence IPSLVDGFKP…SPSDLWKEDL (454 aa). Y826 functions as the O-(5'-phospho-DNA)-tyrosine intermediate in the catalytic mechanism. Positions 1011 to 1020 are interaction with DNA; it reads KLQTTLTCNS. A Nuclear export signal motif is present at residues 1034 to 1044; the sequence is ETVQDILKEFF. Residue K1092 forms a Glycyl lysine isopeptide (Lys-Gly) (interchain with G-Cter in SUMO2) linkage. A disordered region spans residues 1110–1140; sequence AWKEAQEKAAEEDETQNQHDDSSSDSGTPSG. Residues K1214, K1217, K1226, and K1227 each participate in a glycyl lysine isopeptide (Lys-Gly) (interchain with G-Cter in SUMO2) cross-link. At S1236 the chain carries Phosphoserine. Glycyl lysine isopeptide (Lys-Gly) (interchain with G-Cter in SUMO2) cross-links involve residues K1250, K1262, and K1271. A disordered region spans residues 1274-1604; sequence FDEEFSGAPV…PSLPRTGRAR (331 aa). T1292 bears the Phosphothreonine mark. Residues K1323 and K1327 each participate in a glycyl lysine isopeptide (Lys-Gly) (interchain with G-Cter in SUMO2) cross-link. Composition is skewed to basic and acidic residues over residues 1334–1344 and 1358–1370; these read PWSDDESKSES and SLLRRAAAERPKY. Phosphoserine occurs at positions 1336, 1340, 1342, 1344, and 1358. Y1370 carries the post-translational modification Phosphotyrosine. Positions 1374–1392 are enriched in acidic residues; that stretch reads FSEEEDDDADDDDDDNNDL. A Phosphoserine modification is found at S1375. K1398 is covalently cross-linked (Glycyl lysine isopeptide (Lys-Gly) (interchain with G-Cter in SUMO2)). The residue at position 1400 (S1400) is a Phosphoserine. T1403 bears the Phosphothreonine mark. S1413 is subject to Phosphoserine. The residue at position 1421 (Y1421) is a Phosphotyrosine. S1424 is modified (phosphoserine). The segment covering 1430 to 1442 has biased composition (basic and acidic residues); sequence ATPEKSLHDKKSQ. K1440 is covalently cross-linked (Glycyl lysine isopeptide (Lys-Gly) (interchain with G-Cter in SUMO2)). Phosphoserine occurs at positions 1441, 1452, and 1454. A Glycyl lysine isopeptide (Lys-Gly) (interchain with G-Cter in SUMO2) cross-link involves residue K1456. The segment covering 1456-1466 has biased composition (basic and acidic residues); the sequence is KSEDDSAKFDS. A phosphoserine mark is found at S1461, S1466, S1473, and S1476. K1490 is covalently cross-linked (Glycyl lysine isopeptide (Lys-Gly) (interchain with G-Cter in SUMO2)). Positions 1506–1512 are interaction with PLSCR1; the sequence is KPKRAPK. S1522, S1524, and S1526 each carry phosphoserine. Basic residues predominate over residues 1539–1549; the sequence is GKGRGAKKRKA. S1550 and S1552 each carry phosphoserine. The segment covering 1563–1574 has biased composition (basic residues); that stretch reads KTSKTTSKKPKK. T1575 carries the post-translational modification Phosphothreonine. S1576 and S1581 each carry phosphoserine. Phosphothreonine is present on T1592. S1596 is modified (phosphoserine). Position 1609 is a phosphotyrosine (Y1609). A Phosphoserine modification is found at S1613.

It belongs to the type II topoisomerase family. Homodimer. Interacts with KIAA1210. Interacts with PLSCR1. It depends on Mg(2+) as a cofactor. The cofactor is Mn(2+). Ca(2+) is required as a cofactor. (Microbial infection) Deubiquitinated by Epstein-Barr virus BPLF1; leading to stabilized SUMOylated TOP2A trapped in cleavage complexes, which halts the DNA damage response to TOP2A-induced double-strand DNA breaks. In terms of processing, SUMOylated. As to expression, expressed in the tonsil, spleen, lymph node, thymus, skin, pancreas, testis, colon, kidney, liver, brain and lung. Also found in breast, colon and lung carcinomas, Hodgkin's disease, large-cell non-Hodgkin's lymphoma, lymphocytic lymphomas and seminomas.

The protein resides in the nucleus. It localises to the nucleolus. Its subcellular location is the nucleoplasm. The catalysed reaction is ATP-dependent breakage, passage and rejoining of double-stranded DNA.. Functionally, key decatenating enzyme that alters DNA topology by binding to two double-stranded DNA molecules, generating a double-stranded break in one of the strands, passing the intact strand through the broken strand, and religating the broken strand. Plays a role in B-cell differentiation. The polypeptide is DNA topoisomerase 2-beta (TOP2B) (Homo sapiens (Human)).